Here is a 213-residue protein sequence, read N- to C-terminus: Uridine kinase (213 aa).

Residue 14 to 21 (GASASGKS) participates in ATP binding.

This sequence belongs to the uridine kinase family.

It localises to the cytoplasm. The catalysed reaction is uridine + ATP = UMP + ADP + H(+). It catalyses the reaction cytidine + ATP = CMP + ADP + H(+). It participates in pyrimidine metabolism; CTP biosynthesis via salvage pathway; CTP from cytidine: step 1/3. It functions in the pathway pyrimidine metabolism; UMP biosynthesis via salvage pathway; UMP from uridine: step 1/1. The polypeptide is Uridine kinase (Vibrio vulnificus (strain CMCP6)).